Consider the following 92-residue polypeptide: Small ribosomal subunit protein uS19c (92 aa).

The protein belongs to the universal ribosomal protein uS19 family.

The protein resides in the plastid. Its subcellular location is the chloroplast. Functionally, protein S19 forms a complex with S13 that binds strongly to the 16S ribosomal RNA. The polypeptide is Small ribosomal subunit protein uS19c (Cycas taitungensis (Prince sago)).